Consider the following 367-residue polypeptide: Alginate lyase (367 aa).

Residues 1-24 (MTLLKRISSPALLALALFGGAAHA) form the signal peptide. Substrate contacts are provided by residues 63 to 64 (SK), 136 to 137 (HT), and tyrosine 254.

The protein belongs to the polysaccharide lyase 5 family.

Its subcellular location is the periplasm. The enzyme catalyses Eliminative cleavage of alginate to give oligosaccharides with 4-deoxy-alpha-L-erythro-hex-4-enuronosyl groups at their non-reducing ends and beta-D-mannuronate at their reducing end.. In terms of biological role, catalyzes the depolymerization of alginate by cleaving the beta-1,4 glycosidic bond between two adjacent sugar residues via a beta-elimination mechanism. May serve to degrade mislocalized alginate that is trapped in the periplasmic space. The protein is Alginate lyase of Pseudomonas putida (strain GB-1).